The sequence spans 249 residues: Esterase YjfP (249 aa).

Its function is as follows. Displays esterase activity toward palmitoyl-CoA and pNP-butyrate. This chain is Esterase YjfP (yjfP), found in Escherichia coli (strain K12).